A 205-amino-acid polypeptide reads, in one-letter code: Fibrillarin-like rRNA/tRNA 2'-O-methyltransferase (205 aa).

S-adenosyl-L-methionine is bound by residues 60–61, 76–77, 101–102, and 121–124; these read ST, EF, DA, and DIAQ.

Belongs to the methyltransferase superfamily. Fibrillarin family. Interacts with nop5. Component of box C/D small ribonucleoprotein (sRNP) particles that contain rpl7ae, FlpA and nop5, plus a guide RNA.

Its function is as follows. Involved in pre-rRNA and tRNA processing. Utilizes the methyl donor S-adenosyl-L-methionine to catalyze the site-specific 2'-hydroxyl methylation of ribose moieties in rRNA and tRNA. Site specificity is provided by a guide RNA that base pairs with the substrate. Methylation occurs at a characteristic distance from the sequence involved in base pairing with the guide RNA. This Methanospirillum hungatei JF-1 (strain ATCC 27890 / DSM 864 / NBRC 100397 / JF-1) protein is Fibrillarin-like rRNA/tRNA 2'-O-methyltransferase.